Reading from the N-terminus, the 86-residue chain is Anti-adapter protein IraP (86 aa).

Positions 1–36 (MKNLIAELLFKLAQKEEESKELCAQVEALEIIVTAM) form a coiled coil.

Belongs to the IraP family. As to quaternary structure, interacts with RssB.

It localises to the cytoplasm. Its function is as follows. Inhibits RpoS proteolysis by regulating RssB activity, thereby increasing the stability of the sigma stress factor RpoS especially during phosphate starvation, but also in stationary phase and during nitrogen starvation. Its effect on RpoS stability is due to its interaction with RssB, which probably blocks the interaction of RssB with RpoS, and the consequent delivery of the RssB-RpoS complex to the ClpXP protein degradation pathway. This is Anti-adapter protein IraP from Escherichia coli (strain SE11).